A 1071-amino-acid chain; its full sequence is Carbamoyl phosphate synthase pyrimidine-specific large chain (1071 aa).

The tract at residues methionine 1–glutamate 401 is carboxyphosphate synthetic domain. ATP contacts are provided by arginine 129, arginine 169, glycine 175, glycine 176, lysine 208, isoleucine 210, glutamate 215, glycine 241, isoleucine 242, histidine 243, glutamine 284, and glutamate 298. Positions arginine 133 to valine 327 constitute an ATP-grasp 1 domain. Positions 284, 298, and 300 each coordinate Mg(2+). Mn(2+)-binding residues include glutamine 284, glutamate 298, and asparagine 300. The interval alanine 402–serine 546 is oligomerization domain. Positions valine 547–glycine 929 are carbamoyl phosphate synthetic domain. An ATP-grasp 2 domain is found at glutamate 671–leucine 861. Arginine 707, arginine 746, leucine 748, glutamate 752, glycine 777, valine 778, histidine 779, serine 780, glutamine 820, and glutamate 832 together coordinate ATP. 3 residues coordinate Mg(2+): glutamine 820, glutamate 832, and asparagine 834. Residues glutamine 820, glutamate 832, and asparagine 834 each coordinate Mn(2+). Positions isoleucine 930–isoleucine 1071 constitute an MGS-like domain. Residues isoleucine 930 to isoleucine 1071 form an allosteric domain region.

Belongs to the CarB family. Composed of two chains; the small (or glutamine) chain promotes the hydrolysis of glutamine to ammonia, which is used by the large (or ammonia) chain to synthesize carbamoyl phosphate. Tetramer of heterodimers (alpha,beta)4. Interacts with BrxC. It depends on Mg(2+) as a cofactor. Mn(2+) is required as a cofactor.

It catalyses the reaction hydrogencarbonate + L-glutamine + 2 ATP + H2O = carbamoyl phosphate + L-glutamate + 2 ADP + phosphate + 2 H(+). The catalysed reaction is hydrogencarbonate + NH4(+) + 2 ATP = carbamoyl phosphate + 2 ADP + phosphate + 2 H(+). It functions in the pathway amino-acid biosynthesis; L-arginine biosynthesis; carbamoyl phosphate from bicarbonate: step 1/1. The protein operates within pyrimidine metabolism; UMP biosynthesis via de novo pathway; (S)-dihydroorotate from bicarbonate: step 1/3. In terms of biological role, small subunit of the glutamine-dependent carbamoyl phosphate synthetase (CPSase). CPSase catalyzes the formation of carbamoyl phosphate from the ammonia moiety of glutamine, carbonate, and phosphate donated by ATP, constituting the first step of the biosynthetic pathway leading to pyrimidine nucleotides. The large subunit (synthetase) binds the substrates ammonia (free or transferred from glutamine from the small subunit), hydrogencarbonate and ATP and carries out an ATP-coupled ligase reaction, activating hydrogencarbonate by forming carboxy phosphate which reacts with ammonia to form carbamoyl phosphate. The protein is Carbamoyl phosphate synthase pyrimidine-specific large chain (pyrAB) of Bacillus subtilis (strain 168).